The following is a 359-amino-acid chain: MQAATVVINRRALRHNLQRLRELAPASKMVAVVKANAYGHGLLETARTLPDADAFGVARLEEALRLRAGGITKPVLLLEGFFDARDLPTISAQHFHTAVHNEEQLAALEEASLDEPVTVWMKLDTGMHRLGVRPEQAEAFYHRLTQCKNVRQPVNIVSHFARADEPKCGATEKQLAIFNTFCEGKPGQRSIAASGGILLWPQSHFDWVRPGIILYGVSPLEDRSTGADFGCQPVMSLTSSLIAVREHKVGEPVGYGGTWISERDTRLGVVAMGYGDGYPRAAPSGTPVLVNGREVPIVGRVAMDMICVDLGPQAQDKAGDPVILWGEGLPVERIAEMTKVSAYELIARLTSRVAMKYVD.

Lysine 34 serves as the catalytic Proton acceptor; specific for D-alanine. N6-(pyridoxal phosphate)lysine is present on lysine 34. Arginine 129 contributes to the substrate binding site. Tyrosine 255 acts as the Proton acceptor; specific for L-alanine in catalysis. Methionine 303 serves as a coordination point for substrate.

The protein belongs to the alanine racemase family. Pyridoxal 5'-phosphate serves as cofactor.

The catalysed reaction is L-alanine = D-alanine. The protein operates within amino-acid biosynthesis; D-alanine biosynthesis; D-alanine from L-alanine: step 1/1. Catalyzes the interconversion of L-alanine and D-alanine. May also act on other amino acids. In Shigella dysenteriae serotype 1 (strain Sd197), this protein is Alanine racemase (alr).